The primary structure comprises 317 residues: Protein phosphatase PTC7 homolog fig (317 aa).

One can recognise a PPM-type phosphatase domain in the interval 46–312; that stretch reads PYLVTVVQGR…DDITLILASV (267 aa). The Mn(2+) site is built by aspartate 90, glycine 91, and aspartate 235.

It belongs to the PP2C family. Requires Mg(2+) as cofactor. Mn(2+) serves as cofactor.

It catalyses the reaction O-phospho-L-seryl-[protein] + H2O = L-seryl-[protein] + phosphate. The catalysed reaction is O-phospho-L-threonyl-[protein] + H2O = L-threonyl-[protein] + phosphate. This is Protein phosphatase PTC7 homolog fig from Drosophila erecta (Fruit fly).